The following is a 582-amino-acid chain: Cryptochrome-2 (582 aa).

The Photolyase/cryptochrome alpha/beta domain maps to cysteine 12–leucine 141. FAD is bound by residues serine 261, glutamine 298, histidine 364, and aspartate 396–aspartate 398. Residues glycine 521–cysteine 559 are disordered. Polar residues predominate over residues alanine 527–alanine 546.

The protein belongs to the DNA photolyase class-1 family. In terms of assembly, component of the circadian core oscillator, which includes the CRY proteins, CLOCK or NPAS2, BMAL1 or BMAL2, CSNK1E, and the PER proteins. FAD is required as a cofactor. It depends on (6R)-5,10-methylene-5,6,7,8-tetrahydrofolate as a cofactor. As to expression, expressed in the pineal gland.

Its subcellular location is the cytoplasm. It localises to the nucleus. Functionally, transcriptional repressor which forms a core component of the circadian clock. The circadian clock, an internal time-keeping system, regulates various physiological processes through the generation of approximately 24 hour circadian rhythms in gene expression, which are translated into rhythms in metabolism and behavior. It is derived from the Latin roots 'circa' (about) and 'diem' (day) and acts as an important regulator of a wide array of physiological functions including metabolism, sleep, body temperature, blood pressure, endocrine, immune, cardiovascular, and renal function. Consists of two major components: the central clock, residing in the suprachiasmatic nucleus (SCN) of the brain, and the peripheral clocks that are present in nearly every tissue and organ system. Both the central and peripheral clocks can be reset by environmental cues, also known as Zeitgebers (German for 'timegivers'). The predominant Zeitgeber for the central clock is light, which is sensed by retina and signals directly to the SCN. The central clock entrains the peripheral clocks through neuronal and hormonal signals, body temperature and feeding-related cues, aligning all clocks with the external light/dark cycle. Circadian rhythms allow an organism to achieve temporal homeostasis with its environment at the molecular level by regulating gene expression to create a peak of protein expression once every 24 hours to control when a particular physiological process is most active with respect to the solar day. Transcription and translation of core clock components (CLOCK, NPAS2, BMAL1, BMAL2, PER1, PER2, PER3, CRY1 and CRY2) plays a critical role in rhythm generation, whereas delays imposed by post-translational modifications (PTMs) are important for determining the period (tau) of the rhythms (tau refers to the period of a rhythm and is the length, in time, of one complete cycle). A diurnal rhythm is synchronized with the day/night cycle, while the ultradian and infradian rhythms have a period shorter and longer than 24 hours, respectively. Disruptions in the circadian rhythms contribute to the pathology of cardiovascular diseases, cancer, metabolic syndromes and aging. A transcription/translation feedback loop (TTFL) forms the core of the molecular circadian clock mechanism. Transcription factors, CLOCK or NPAS2 and BMAL1 or BMAL2, form the positive limb of the feedback loop, act in the form of a heterodimer and activate the transcription of core clock genes and clock-controlled genes (involved in key metabolic processes), harboring E-box elements (5'-CACGTG-3') within their promoters. The core clock genes: PER1/2/3 and CRY1/2 which are transcriptional repressors form the negative limb of the feedback loop and interact with the CLOCK|NPAS2-BMAL1|BMAL2 heterodimer inhibiting its activity and thereby negatively regulating their own expression. This heterodimer also activates nuclear receptors NR1D1/2, RORA/B/G, which form a second feedback loop and which activate and repress BMAL1 transcription, respectively. CRY1 and CRY2 have redundant functions but also differential and selective contributions at least in defining the pace of the SCN circadian clock and its circadian transcriptional outputs. Less potent transcriptional repressor in cerebellum and liver than CRY1, though less effective in lengthening the period of the SCN oscillator. Seems to play a critical role in tuning SCN circadian period by opposing the action of CRY1. With CRY1, dispensable for circadian rhythm generation but necessary for the development of intercellular networks for rhythm synchrony. Represses CLOCK-BMAL1-mediated transcriptional activation. In Gallus gallus (Chicken), this protein is Cryptochrome-2 (CRY2).